We begin with the raw amino-acid sequence, 78 residues long: Defensin beta 136 (78 aa).

An N-terminal signal peptide occupies residues 1–21; that stretch reads MNLCLSALLFFLVILLPSGKG. 3 disulfide bridges follow: C33–C60, C40–C54, and C44–C61.

Belongs to the beta-defensin family.

The protein resides in the secreted. In terms of biological role, host defense peptide that exhibits antibacterial and antifungal activity. Exhibits antimicrobial activity against E.coli, S.aureus and C.albicans (in vitro). Has high lipopolysaccharide (LPS)-binding affinity, and may thereby be involved in immunoregulation through LPS neutralization. The protein is Defensin beta 136 (DEFB136) of Homo sapiens (Human).